Reading from the N-terminus, the 499-residue chain is MIRNSMKSHTELLSWNLLQKEADRVRLNSDSLTCVVPDSNNYESSKQINCIEYDYSRQRVNRTIIDLLIDLANEVKLQEKIDNLINGKKINISENRPALHTALRDLGNKSIMIDGLDIMSAVINTREKIKVISNQIREKKWLGHSGLPITDIVNIGIGGSDLGPRVCINALSNYISKEFNYHFISDVDPASFNDVIAKINPQTTLFIVSSKSFTTKETLLNARKAFALYEDTASIDQHFIAVTAHPERAYQMGIKTVLPIWDWVGGRFSFCSAVNLITAIAIGYEQFVELLAGAHDVDTHVQFTDFKNNIPVLMALIGIWNNNFLNIHNLLILTYSKKLEYFVPYVQQLDMESNGKSIDVNGSMVDYATGPIVWGGLGNQAQHSYFQLLCQGTHRCVGDFITLKTNDEHEINSMCHYKMKVLSEGIQTIENPYGYIPGNMPMNHLILSDCSPYTLGALVALYEHKIFVQSVIWNINPFDQPGIESAKSAHREITLSSES.

The Proton donor role is filled by Glu-352. Active-site residues include His-383 and Lys-487.

The protein belongs to the GPI family.

Its subcellular location is the cytoplasm. It catalyses the reaction alpha-D-glucose 6-phosphate = beta-D-fructose 6-phosphate. Its pathway is carbohydrate biosynthesis; gluconeogenesis. It participates in carbohydrate degradation; glycolysis; D-glyceraldehyde 3-phosphate and glycerone phosphate from D-glucose: step 2/4. Catalyzes the reversible isomerization of glucose-6-phosphate to fructose-6-phosphate. The sequence is that of Glucose-6-phosphate isomerase from Legionella pneumophila (strain Paris).